The following is a 362-amino-acid chain: Phosphoserine aminotransferase (362 aa).

Ser9 and Arg42 together coordinate L-glutamate. Pyridoxal 5'-phosphate is bound by residues 76–77 (GR), Trp102, Thr153, Asp174, and Gln197. Lys198 carries the post-translational modification N6-(pyridoxal phosphate)lysine. 239–240 (NT) serves as a coordination point for pyridoxal 5'-phosphate.

It belongs to the class-V pyridoxal-phosphate-dependent aminotransferase family. SerC subfamily. Homodimer. The cofactor is pyridoxal 5'-phosphate.

The protein resides in the cytoplasm. It carries out the reaction O-phospho-L-serine + 2-oxoglutarate = 3-phosphooxypyruvate + L-glutamate. The catalysed reaction is 4-(phosphooxy)-L-threonine + 2-oxoglutarate = (R)-3-hydroxy-2-oxo-4-phosphooxybutanoate + L-glutamate. The protein operates within amino-acid biosynthesis; L-serine biosynthesis; L-serine from 3-phospho-D-glycerate: step 2/3. It functions in the pathway cofactor biosynthesis; pyridoxine 5'-phosphate biosynthesis; pyridoxine 5'-phosphate from D-erythrose 4-phosphate: step 3/5. Its function is as follows. Catalyzes the reversible conversion of 3-phosphohydroxypyruvate to phosphoserine and of 3-hydroxy-2-oxo-4-phosphonooxybutanoate to phosphohydroxythreonine. The sequence is that of Phosphoserine aminotransferase from Salmonella choleraesuis (strain SC-B67).